Consider the following 96-residue polypeptide: uncharacterized protein (96 aa).

Residues 1-23 form the signal peptide; it reads MKQFYSVVLTIIIYISSQSNVVS. 3 disulfides stabilise this stretch: C60–C74, C67–C78, and C73–C83.

It is found in the secreted. This is an uncharacterized protein from Schistosoma japonicum (Blood fluke).